The following is a 375-amino-acid chain: Chaperone protein DnaJ (375 aa).

The J domain maps to 6-71; it reads DYYEILGVSR…DKRARYDQYG (66 aa). The segment at 132 to 214 adopts a CR-type zinc-finger fold; that stretch reads GTTKKITIPR…CQGSGKVRKQ (83 aa). Residues C145, C148, C162, C165, C188, C191, C202, and C205 each contribute to the Zn(2+) site. 4 CXXCXGXG motif repeats span residues 145–152, 162–169, 188–195, and 202–209; these read CDTCNGTG, CPQCNGSG, CDRCGGRG, and CPTCQGSG. The interval 222–243 is disordered; that stretch reads PPGVDTGTRLRMPNEGEAGDKG.

This sequence belongs to the DnaJ family. Homodimer. The cofactor is Zn(2+).

The protein resides in the cytoplasm. In terms of biological role, participates actively in the response to hyperosmotic and heat shock by preventing the aggregation of stress-denatured proteins and by disaggregating proteins, also in an autonomous, DnaK-independent fashion. Unfolded proteins bind initially to DnaJ; upon interaction with the DnaJ-bound protein, DnaK hydrolyzes its bound ATP, resulting in the formation of a stable complex. GrpE releases ADP from DnaK; ATP binding to DnaK triggers the release of the substrate protein, thus completing the reaction cycle. Several rounds of ATP-dependent interactions between DnaJ, DnaK and GrpE are required for fully efficient folding. Also involved, together with DnaK and GrpE, in the DNA replication of plasmids through activation of initiation proteins. In Halothermothrix orenii (strain H 168 / OCM 544 / DSM 9562), this protein is Chaperone protein DnaJ.